Here is a 101-residue protein sequence, read N- to C-terminus: ATP synthase subunit c (101 aa).

2 helical membrane-spanning segments follow: residues 31–51 (AFAY…GAGQ) and 81–101 (AISE…IFVG).

The protein belongs to the ATPase C chain family. F-type ATPases have 2 components, F(1) - the catalytic core - and F(0) - the membrane proton channel. F(1) has five subunits: alpha(3), beta(3), gamma(1), delta(1), epsilon(1). F(0) has three main subunits: a(1), b(2) and c(10-14). The alpha and beta chains form an alternating ring which encloses part of the gamma chain. F(1) is attached to F(0) by a central stalk formed by the gamma and epsilon chains, while a peripheral stalk is formed by the delta and b chains.

The protein resides in the cell membrane. Functionally, f(1)F(0) ATP synthase produces ATP from ADP in the presence of a proton or sodium gradient. F-type ATPases consist of two structural domains, F(1) containing the extramembraneous catalytic core and F(0) containing the membrane proton channel, linked together by a central stalk and a peripheral stalk. During catalysis, ATP synthesis in the catalytic domain of F(1) is coupled via a rotary mechanism of the central stalk subunits to proton translocation. Key component of the F(0) channel; it plays a direct role in translocation across the membrane. A homomeric c-ring of between 10-14 subunits forms the central stalk rotor element with the F(1) delta and epsilon subunits. In Mesomycoplasma hyopneumoniae (strain 7448) (Mycoplasma hyopneumoniae), this protein is ATP synthase subunit c.